The sequence spans 68 residues: Protein SlyX homolog (68 aa).

The protein belongs to the SlyX family.

This chain is Protein SlyX homolog, found in Pseudomonas entomophila (strain L48).